Reading from the N-terminus, the 90-residue chain is MARTVFCQKLQKEAEGLGFQLYPGEIGEKIFNNISKEAWAQWQHKQTMLINEKHLNMMDPEHRSFLEQQMVGFLFENKEVEIEGYKPPEK.

This sequence belongs to the Fe(2+)-trafficking protein family.

In terms of biological role, could be a mediator in iron transactions between iron acquisition and iron-requiring processes, such as synthesis and/or repair of Fe-S clusters in biosynthetic enzymes. In Pseudoalteromonas translucida (strain TAC 125), this protein is Probable Fe(2+)-trafficking protein.